The following is a 283-amino-acid chain: Pantothenate synthetase (283 aa).

Residue 30-37 participates in ATP binding; it reads MGNLHDGH. His37 serves as the catalytic Proton donor. (R)-pantoate is bound at residue Gln61. Gln61 serves as a coordination point for beta-alanine. Residue 149–152 coordinates ATP; it reads GEKD. Gln155 provides a ligand contact to (R)-pantoate. ATP contacts are provided by residues Met178 and 186 to 189; that span reads LSSR.

The protein belongs to the pantothenate synthetase family. In terms of assembly, homodimer.

It is found in the cytoplasm. It catalyses the reaction (R)-pantoate + beta-alanine + ATP = (R)-pantothenate + AMP + diphosphate + H(+). Its pathway is cofactor biosynthesis; (R)-pantothenate biosynthesis; (R)-pantothenate from (R)-pantoate and beta-alanine: step 1/1. With respect to regulation, activation requires a combination of a divalent cation, magnesium or manganese, and a monovalent cation, potassium or ammonium. Above the optimum concentration for activation, magnesium and manganese are rather inhibitory. Also activated by 2-mercaptoethanol, dithiothreitol, cysteine and glutathione. Inhibited by divalent cations (mercury, cobalt, zinc, copper, silver), chelating agents (EDTA, EGTA and o-phenanthroline), and analogs of beta-alanine (taurine, gamma-aminobutyrate, gamma-amino-beta-hydroxybutyrate). In terms of biological role, catalyzes the condensation of pantoate with beta-alanine in an ATP-dependent reaction via a pantoyl-adenylate intermediate. The chain is Pantothenate synthetase (panC) from Escherichia coli (strain K12).